The chain runs to 451 residues: Phosphoglucosamine mutase (451 aa).

Catalysis depends on Ser-102, which acts as the Phosphoserine intermediate. 4 residues coordinate Mg(2+): Ser-102, Asp-243, Asp-245, and Asp-247. Ser-102 is subject to Phosphoserine.

It belongs to the phosphohexose mutase family. It depends on Mg(2+) as a cofactor. Activated by phosphorylation.

It catalyses the reaction alpha-D-glucosamine 1-phosphate = D-glucosamine 6-phosphate. Catalyzes the conversion of glucosamine-6-phosphate to glucosamine-1-phosphate. The polypeptide is Phosphoglucosamine mutase (Brucella abortus (strain 2308)).